The following is a 70-amino-acid chain: MIARLLILIARAWQLGPSRVLPPTCRYAPSCSEYAIVALRRHGAIKGGWIATKRLLRCHPWGGHGYDPVP.

This sequence belongs to the UPF0161 family.

The protein localises to the cell inner membrane. Its function is as follows. Could be involved in insertion of integral membrane proteins into the membrane. This is Putative membrane protein insertion efficiency factor from Sphingopyxis alaskensis (strain DSM 13593 / LMG 18877 / RB2256) (Sphingomonas alaskensis).